The following is a 147-amino-acid chain: uncharacterized protein (147 aa).

Belongs to the MG185/MG260 family.

This is an uncharacterized protein from Mycoplasma pneumoniae (strain ATCC 29342 / M129 / Subtype 1) (Mycoplasmoides pneumoniae).